Consider the following 413-residue polypeptide: Tyrosine--tRNA ligase (413 aa).

Y34 contributes to the L-tyrosine binding site. The 'HIGH' region signature appears at 39-48 (PTSHSLTVGH). L-tyrosine contacts are provided by Y164 and Q168. Residues 225–229 (KFGKS) carry the 'KMSKS' region motif. K228 lines the ATP pocket. The S4 RNA-binding domain maps to 347 to 413 (ILLVDALVQT…GKKNNALIVF (67 aa)).

Belongs to the class-I aminoacyl-tRNA synthetase family. TyrS type 1 subfamily. Homodimer.

The protein localises to the cytoplasm. It catalyses the reaction tRNA(Tyr) + L-tyrosine + ATP = L-tyrosyl-tRNA(Tyr) + AMP + diphosphate + H(+). Its function is as follows. Catalyzes the attachment of tyrosine to tRNA(Tyr) in a two-step reaction: tyrosine is first activated by ATP to form Tyr-AMP and then transferred to the acceptor end of tRNA(Tyr). In Aster yellows witches'-broom phytoplasma (strain AYWB), this protein is Tyrosine--tRNA ligase.